A 495-amino-acid polypeptide reads, in one-letter code: MPYIKHIETKRISARTYYGRFCVLPLPAGQGITLGNALRRILLGDLVGFAATSANLAGASHEFDTLPGIRESVLEILLNIKQLVFKQISSRPKDTNRFAMRASLNLTGPATVTAKDLVLPSWMKVVDPSQYIATLASGASLEFEIQLSQGSGYRLRRTSLVPPGFTLPPPRDPLEPENDSKSETKSKSKGKSKNTSTSDVQLADTDVNAQIIDTDSNSTETEKEAPHIPSMRDDHMTLHIDAVFFPVTRVNYRVEEEVINGRRREELVIDIWTNGSLSPRKALDQAAVILIRMLASLQAPPPLLIEPEKKPTTKTIAKEIALTPIESLDLSVRSFNCLKRANITNVGKLIAYTRQELLQLKNFGTKSASEVVDVLNSRFKLALKGEEVTDQEQVVNQPSSQIATKKGARKKVNRASRPIDSKETRRSRNPVKSTASEVPEKMLRKSSKTKVKAPKSETLPKPSKSANLQQAEESLQVPKLRRKSELSSSQNPEET.

The tract at residues 1–301 is alpha N-terminal domain (alpha-NTD); that stretch reads MPYIKHIETK…RMLASLQAPP (301 aa). Disordered regions lie at residues 159–227 and 391–495; these read SLVP…EAPH and QEQV…PEET. The interval 170 to 237 is insert; that stretch reads PRDPLEPEND…IPSMRDDHMT (68 aa). Basic and acidic residues predominate over residues 172-186; sequence DPLEPENDSKSETKS. Polar residues-rich tracts occupy residues 207–219 and 391–403; these read VNAQ…SNST and QEQV…SQIA. The segment at 317–495 is alpha C-terminal domain (alpha-CTD); it reads AKEIALTPIE…LSSSQNPEET (179 aa). The span at 417 to 426 shows a compositional bias: basic and acidic residues; it reads RPIDSKETRR. The segment covering 444–453 has biased composition (basic residues); that stretch reads RKSSKTKVKA. 2 stretches are compositionally biased toward polar residues: residues 464-473 and 486-495; these read KSANLQQAEE and LSSSQNPEET.

Belongs to the RNA polymerase alpha chain family. As to quaternary structure, in plastids the minimal PEP RNA polymerase catalytic core is composed of four subunits: alpha, beta, beta', and beta''. When a (nuclear-encoded) sigma factor is associated with the core the holoenzyme is formed, which can initiate transcription.

Its subcellular location is the plastid. The protein resides in the chloroplast. The enzyme catalyses RNA(n) + a ribonucleoside 5'-triphosphate = RNA(n+1) + diphosphate. In terms of biological role, DNA-dependent RNA polymerase catalyzes the transcription of DNA into RNA using the four ribonucleoside triphosphates as substrates. This Nephroselmis olivacea (Green alga) protein is DNA-directed RNA polymerase subunit alpha.